We begin with the raw amino-acid sequence, 218 residues long: Histone H1 (218 aa).

Over residues 1-19 the composition is skewed to low complexity; the sequence is MSETAPVAAPAVSAPGAKA. Disordered stretches follow at residues 1-42 and 89-218; these read MSET…PSVT and VSKG…TKKK. Residue S2 is modified to N-acetylserine. One can recognise an H15 domain in the interval 37 to 110; it reads AGPSVTELIT…GASGSFKLNK (74 aa). Basic residues-rich tracts occupy residues 118–133, 141–158, 166–184, and 191–218; these read KATKKKPAAKPKKPAA, KKPKKAAAVKKSPKKAKK, KAAKSPKKATKAGRPKKTA, and KAVKPKAAKSKAAKPKAAKAKKAATKKK.

It belongs to the histone H1/H5 family.

Its subcellular location is the nucleus. It localises to the chromosome. Histones H1 are necessary for the condensation of nucleosome chains into higher-order structures. The sequence is that of Histone H1 from Gallus gallus (Chicken).